The primary structure comprises 252 residues: Triosephosphate isomerase (252 aa).

10-12 contributes to the substrate binding site; sequence NWK. Residue His96 is the Electrophile of the active site. The active-site Proton acceptor is Glu168. Residues Gly174, Ser213, and 234–235 contribute to the substrate site; that span reads GG.

The protein belongs to the triosephosphate isomerase family. In terms of assembly, homodimer.

The protein resides in the cytoplasm. It catalyses the reaction D-glyceraldehyde 3-phosphate = dihydroxyacetone phosphate. It functions in the pathway carbohydrate biosynthesis; gluconeogenesis. The protein operates within carbohydrate degradation; glycolysis; D-glyceraldehyde 3-phosphate from glycerone phosphate: step 1/1. In terms of biological role, involved in the gluconeogenesis. Catalyzes stereospecifically the conversion of dihydroxyacetone phosphate (DHAP) to D-glyceraldehyde-3-phosphate (G3P). The sequence is that of Triosephosphate isomerase from Nitrosomonas eutropha (strain DSM 101675 / C91 / Nm57).